A 342-amino-acid polypeptide reads, in one-letter code: MNSLVALVLLGQMIGSTLSHHLQSHVDCNGEDAEKWADMAVHYINEHNLHGYKQVFNVINEIHVLPRRPRGKIIILELKLLETECHVLDPTPVENCTVRPPHYHAVEGDCDVKILHDEGVDKVIGAKCHSDPDSVEDVRRNCPKCPILLPLSDPHVVDSVEYVLNKHNEKLSGHVYEVLEISRGQHKYEPEAFYVEFAIVEVNCTAQEAHDDHHHCHPNTAGENHIGFCRATVFRSHASLEKPKDEQFESDCVIFDVKEGHAHSHLIEHHIGNYNTSPGHNNTVLNLAHSHNHTSASHESHSHEHVAEVPVAVAKREVPTNTPHDHTHPVKLCPGKVHHFKL.

The signal sequence occupies residues 1–19 (MNSLVALVLLGQMIGSTLS). Cystatin fetuin-A-type domains follow at residues 20–129 (HHLQ…AKCH) and 140–253 (RNCP…SDCV). 6 disulfides stabilise this stretch: Cys28-Cys333, Cys85-Cys96, Cys110-Cys128, Cys142-Cys145, Cys204-Cys216, and Cys229-Cys252. The N-linked (GlcNAc...) asparagine glycan is linked to Asn95. N-linked (GlcNAc...) asparagine glycosylation is present at Asn203. Residues Asn281 and Asn292 are each glycosylated (N-linked (GlcNAc...) asparagine).

Belongs to the fetuin family. As to quaternary structure, homodimer. In terms of tissue distribution, expressed by the liver.

It localises to the secreted. Its function is as follows. Potent inhibitor of hemorrhagic activity but also proteolytic activities. Inhibition occurs by formation of a non-covalent complex between this protein and the proteinases at their metalloproteinase domains. The polypeptide is Antihemorrhagic factor cHLP-B (Gloydius brevicauda (Korean slamosa snake)).